The sequence spans 179 residues: Putative manganese efflux pump MntP (179 aa).

The next 6 helical transmembrane spans lie at 4 to 24, 39 to 59, 69 to 89, 102 to 122, 128 to 148, and 159 to 179; these read VLIL…GLGI, LFFG…GIGL, IVAF…AFNE, ILLT…YSLH, IYLS…IGVY, and SKAE…ILLF.

This sequence belongs to the MntP (TC 9.B.29) family.

It localises to the cell inner membrane. Probably functions as a manganese efflux pump. The polypeptide is Putative manganese efflux pump MntP (Aliarcobacter butzleri (strain RM4018) (Arcobacter butzleri)).